The chain runs to 279 residues: Putative pyruvate, phosphate dikinase regulatory protein (279 aa).

Residue 153-160 (GVSRTSKT) participates in ADP binding.

This sequence belongs to the pyruvate, phosphate/water dikinase regulatory protein family. PDRP subfamily.

It carries out the reaction N(tele)-phospho-L-histidyl/L-threonyl-[pyruvate, phosphate dikinase] + ADP = N(tele)-phospho-L-histidyl/O-phospho-L-threonyl-[pyruvate, phosphate dikinase] + AMP + H(+). It catalyses the reaction N(tele)-phospho-L-histidyl/O-phospho-L-threonyl-[pyruvate, phosphate dikinase] + phosphate + H(+) = N(tele)-phospho-L-histidyl/L-threonyl-[pyruvate, phosphate dikinase] + diphosphate. Bifunctional serine/threonine kinase and phosphorylase involved in the regulation of the pyruvate, phosphate dikinase (PPDK) by catalyzing its phosphorylation/dephosphorylation. The protein is Putative pyruvate, phosphate dikinase regulatory protein of Bradyrhizobium sp. (strain ORS 278).